Here is a 97-residue protein sequence, read N- to C-terminus: Co-chaperonin GroES (97 aa).

It belongs to the GroES chaperonin family. As to quaternary structure, heptamer of 7 subunits arranged in a ring. Interacts with the chaperonin GroEL.

The protein localises to the cytoplasm. Functionally, together with the chaperonin GroEL, plays an essential role in assisting protein folding. The GroEL-GroES system forms a nano-cage that allows encapsulation of the non-native substrate proteins and provides a physical environment optimized to promote and accelerate protein folding. GroES binds to the apical surface of the GroEL ring, thereby capping the opening of the GroEL channel. The chain is Co-chaperonin GroES from Baumannia cicadellinicola subsp. Homalodisca coagulata.